A 193-amino-acid polypeptide reads, in one-letter code: Potassium-transporting ATPase KdpC subunit (193 aa).

The helical transmembrane segment at 7-27 threads the bilayer; it reads PLIVVFVVLVAVTGLAYPAVM.

This sequence belongs to the KdpC family. In terms of assembly, the system is composed of three essential subunits: KdpA, KdpB and KdpC.

The protein resides in the cell inner membrane. In terms of biological role, part of the high-affinity ATP-driven potassium transport (or Kdp) system, which catalyzes the hydrolysis of ATP coupled with the electrogenic transport of potassium into the cytoplasm. This subunit acts as a catalytic chaperone that increases the ATP-binding affinity of the ATP-hydrolyzing subunit KdpB by the formation of a transient KdpB/KdpC/ATP ternary complex. This Burkholderia mallei (strain NCTC 10247) protein is Potassium-transporting ATPase KdpC subunit.